A 154-amino-acid chain; its full sequence is uncharacterized protein (154 aa).

The protein resides in the mitochondrion. This is an uncharacterized protein from Marchantia polymorpha (Common liverwort).